We begin with the raw amino-acid sequence, 328 residues long: Nickel import system permease protein NikB (328 aa).

6 helical membrane-spanning segments follow: residues 11 to 31, 104 to 124, 139 to 159, 170 to 190, 229 to 249, and 279 to 299; these read LMQMIVVLFVISTLTFILMKL, LLISFSTLVVSLCISIPLGII, VISTLSISLPAFFIGIILLFI, ILSQFILPVITLSLGMCAYII, ILPIIPLLGISLGSLIGGTVV, and VLFIGFFVVIINTIADLLTLL. Residues 100-297 form the ABC transmembrane type-1 domain; that stretch reads APITLLISFS…IINTIADLLT (198 aa).

It belongs to the binding-protein-dependent transport system permease family. OppBC subfamily. The complex is composed of two ATP-binding proteins (NikD and NikE), two transmembrane proteins (NikB and NikC) and a solute-binding protein (NikA).

It is found in the cell membrane. Part of the ABC transporter complex NikABCDE (Opp2) involved in nickel import. Probably responsible for the translocation of the substrate across the membrane. This chain is Nickel import system permease protein NikB, found in Staphylococcus aureus (strain MSSA476).